Reading from the N-terminus, the 554-residue chain is Oxygen-dependent choline dehydrogenase (554 aa).

4 to 33 (DYIIIGAGSAGNVLATRLTEDPNTTVLLLE) serves as a coordination point for FAD. Catalysis depends on histidine 473, which acts as the Proton acceptor.

The protein belongs to the GMC oxidoreductase family. The cofactor is FAD.

It carries out the reaction choline + A = betaine aldehyde + AH2. The catalysed reaction is betaine aldehyde + NAD(+) + H2O = glycine betaine + NADH + 2 H(+). The protein operates within amine and polyamine biosynthesis; betaine biosynthesis via choline pathway; betaine aldehyde from choline (cytochrome c reductase route): step 1/1. Functionally, involved in the biosynthesis of the osmoprotectant glycine betaine. Catalyzes the oxidation of choline to betaine aldehyde and betaine aldehyde to glycine betaine at the same rate. This Klebsiella pneumoniae (strain 342) protein is Oxygen-dependent choline dehydrogenase.